We begin with the raw amino-acid sequence, 255 residues long: 2-dehydro-3,6-dideoxy-6-sulfogluconate aldolase (255 aa).

H38 functions as the Proton acceptor in the catalytic mechanism. Positions 141 and 167 each coordinate a divalent metal cation.

The protein belongs to the HpcH/HpaI aldolase family. In terms of assembly, homohexamer; trimer of dimers. Requires a divalent metal cation as cofactor.

It carries out the reaction 2-dehydro-3,6-dideoxy-6-sulfo-D-gluconate = (2S)-3-sulfolactaldehyde + pyruvate. Functionally, catalyzes the retro-aldol cleavage of 2-dehydro-3,6-dideoxy-6-sulfo-D-gluconate to (2S)-3-sulfolactaldehyde and pyruvate. Is involved in a degradation pathway of sulfoquinovose (SQ) that allows P.putida SQ1 to use SQ as the sole carbon and energy source for growth. The chain is 2-dehydro-3,6-dideoxy-6-sulfogluconate aldolase from Pseudomonas putida (Arthrobacter siderocapsulatus).